We begin with the raw amino-acid sequence, 141 residues long: uncharacterized protein (141 aa).

This sequence belongs to the PhzA/PhzB family.

This is an uncharacterized protein from Pseudomonas aeruginosa (strain ATCC 15692 / DSM 22644 / CIP 104116 / JCM 14847 / LMG 12228 / 1C / PRS 101 / PAO1).